The chain runs to 440 residues: MGPGSQRALFLLLLLLASPGARAFQSCLNKQQLLTTIRQLQQLLKGQETRFTEGIRNMKSRLAALQNTVNKMTPDAPPVSCPALEAPPDGKKFGSKYLVDHEVYFTCNPGFQLVGPSSVVCLANGSWTGEQPRCRDISECSSQPCHNGGTCVEGINHYRCICPPGKTGNRCQHQTQAAAPDGGEAGDPAFSRAPRCAQVEREQHCSCEAGFHLSSTTGGHSVCQDVNECEIYGQKGRPRLCMHACVNTPGSYRCTCPSGYRILADGKSCEDVDECAGPQHMCPRGTTCINTGGGFQCVNPECPEGSGNISYVKTSPFQCERNPCPMDSRPCRHLPKTISFHYLSLPSKLKTPITLFRMATASIPGHPGPNSLRFGIVGGNSRGHFVMQRSDRQTGELILTQTLEGPQTLEVDVDMSEYLERSFQANHVSKVTIFVSRYDF.

The first 24 residues, 1–24 (MGPGSQRALFLLLLLLASPGARAF), serve as a signal peptide directing secretion. The stretch at 28-73 (LNKQQLLTTIRQLQQLLKGQETRFTEGIRNMKSRLAALQNTVNKMT) forms a coiled coil. The Sushi domain maps to 79 to 136 (VSCPALEAPPDGKKFGSKYLVDHEVYFTCNPGFQLVGPSSVVCLANGSWTGEQPRCRD). Intrachain disulfides connect Cys81–Cys121, Cys107–Cys134, Cys140–Cys151, Cys145–Cys160, Cys162–Cys171, Cys229–Cys245, Cys241–Cys254, Cys256–Cys269, Cys275–Cys288, Cys282–Cys297, and Cys302–Cys319. N-linked (GlcNAc...) asparagine glycosylation occurs at Asn124. Residues 136–172 (DISECSSQPCHNGGTCVEGINHYRCICPPGKTGNRCQ) form the EGF-like 1; calcium-binding domain. The 46-residue stretch at 225–270 (DVNECEIYGQKGRPRLCMHACVNTPGSYRCTCPSGYRILADGKSCE) folds into the EGF-like 2; calcium-binding domain. The EGF-like 3; calcium-binding domain occupies 271 to 320 (DVDECAGPQHMCPRGTTCINTGGGFQCVNPECPEGSGNISYVKTSPFQCE). A glycan (N-linked (GlcNAc...) asparagine) is linked at Asn308.

The protein belongs to the fibulin family. As to quaternary structure, interacts with heparin, FBLN1, FN1 and DSPP. Preferentially binds dental mesenchyme cells and odontoblasts but not dental epithelial cells or nondental cells. Binding requires a heparan sulfate-containing receptor on the cell surface as well as an integrin. N-glycosylated. As to expression, highly expressed in newborn incisors and molars. A weaker expression is seen in the brain, kidneys, muscles and bones.

The protein resides in the secreted. Its subcellular location is the extracellular space. The protein localises to the extracellular matrix. An adhesion molecule that interacts with extracellular matrix molecules in developing teeth and may play important roles in differentiation and maintenance of odontoblasts as well as in dentin formation. This chain is Fibulin-7 (Fbln7), found in Mus musculus (Mouse).